A 158-amino-acid polypeptide reads, in one-letter code: 2-C-methyl-D-erythritol 2,4-cyclodiphosphate synthase (158 aa).

Positions 9 and 11 each coordinate a divalent metal cation. Residues 9-11 (DVH) and 35-36 (HS) each bind 4-CDP-2-C-methyl-D-erythritol 2-phosphate. His43 is a binding site for a divalent metal cation. Residues 57–59 (DIG), 62–66 (FPDTD), 101–107 (AQKPKMA), 133–136 (TTTE), Phe140, and Arg143 each bind 4-CDP-2-C-methyl-D-erythritol 2-phosphate.

It belongs to the IspF family. Homotrimer. A divalent metal cation is required as a cofactor.

It catalyses the reaction 4-CDP-2-C-methyl-D-erythritol 2-phosphate = 2-C-methyl-D-erythritol 2,4-cyclic diphosphate + CMP. It participates in isoprenoid biosynthesis; isopentenyl diphosphate biosynthesis via DXP pathway; isopentenyl diphosphate from 1-deoxy-D-xylulose 5-phosphate: step 4/6. Involved in the biosynthesis of isopentenyl diphosphate (IPP) and dimethylallyl diphosphate (DMAPP), two major building blocks of isoprenoid compounds. Catalyzes the conversion of 4-diphosphocytidyl-2-C-methyl-D-erythritol 2-phosphate (CDP-ME2P) to 2-C-methyl-D-erythritol 2,4-cyclodiphosphate (ME-CPP) with a corresponding release of cytidine 5-monophosphate (CMP). In Bacillus velezensis (strain DSM 23117 / BGSC 10A6 / LMG 26770 / FZB42) (Bacillus amyloliquefaciens subsp. plantarum), this protein is 2-C-methyl-D-erythritol 2,4-cyclodiphosphate synthase.